Reading from the N-terminus, the 155-residue chain is MPSIDGTTGNLPSGRVAIIASRYNANICDSMVQAALQSLSDAGIPEDKQWLIRVPGAWELCWAVEQAFQHADVIGAITLGCVIKGETTHDEHINRAVSDTLMEQAVRSGRPVGFGLLTCNTVEQAIQRSGGAVGNKGHEAADAMLEMLRLQTKMR.

Residues Tyr23, Ala57–Glu59, and Cys81–Ile83 contribute to the 5-amino-6-(D-ribitylamino)uracil site. Glu86–Thr87 serves as a coordination point for (2S)-2-hydroxy-3-oxobutyl phosphate. His89 functions as the Proton donor in the catalytic mechanism. Phe114 provides a ligand contact to 5-amino-6-(D-ribitylamino)uracil. (2S)-2-hydroxy-3-oxobutyl phosphate is bound at residue Arg128.

The protein belongs to the DMRL synthase family.

It carries out the reaction (2S)-2-hydroxy-3-oxobutyl phosphate + 5-amino-6-(D-ribitylamino)uracil = 6,7-dimethyl-8-(1-D-ribityl)lumazine + phosphate + 2 H2O + H(+). Its pathway is cofactor biosynthesis; riboflavin biosynthesis; riboflavin from 2-hydroxy-3-oxobutyl phosphate and 5-amino-6-(D-ribitylamino)uracil: step 1/2. Its function is as follows. Catalyzes the formation of 6,7-dimethyl-8-ribityllumazine by condensation of 5-amino-6-(D-ribitylamino)uracil with 3,4-dihydroxy-2-butanone 4-phosphate. This is the penultimate step in the biosynthesis of riboflavin. This is 6,7-dimethyl-8-ribityllumazine synthase from Rhodopirellula baltica (strain DSM 10527 / NCIMB 13988 / SH1).